A 202-amino-acid chain; its full sequence is MKNVLVLNASLQGENGNSSQLTSEFVTQLQQTESIKVEKVDLNTLNLPHLSAQEMQTWSMLSDNMTNDQAALAAYSNELLAQLERSDVIVVGMPMYNFTIPSTFKAWIDRVARAGRTFSYTSEGPKGHLQGKTVYIFAARGGIYQGTDNDTQTPYLKLVFGLMGITDVNFIYLEGLNMGEEYAQTSWQQARESLTTLLPATV.

FMN is bound by residues Ser10 and 95–98 (MYNF).

The protein belongs to the azoreductase type 1 family. As to quaternary structure, homodimer. FMN serves as cofactor.

The enzyme catalyses 2 a quinone + NADH + H(+) = 2 a 1,4-benzosemiquinone + NAD(+). It carries out the reaction N,N-dimethyl-1,4-phenylenediamine + anthranilate + 2 NAD(+) = 2-(4-dimethylaminophenyl)diazenylbenzoate + 2 NADH + 2 H(+). Its function is as follows. Quinone reductase that provides resistance to thiol-specific stress caused by electrophilic quinones. In terms of biological role, also exhibits azoreductase activity. Catalyzes the reductive cleavage of the azo bond in aromatic azo compounds to the corresponding amines. In Pseudoalteromonas atlantica (strain T6c / ATCC BAA-1087), this protein is FMN-dependent NADH:quinone oxidoreductase.